Reading from the N-terminus, the 256-residue chain is Ribonuclease 3 (256 aa).

Residues 3-125 (LDALQQRLGY…IVGAVFLDAG (123 aa)) enclose the RNase III domain. Glu-38 contributes to the Mg(2+) binding site. Asp-42 is an active-site residue. Positions 111 and 114 each coordinate Mg(2+). Residue Glu-114 is part of the active site. A DRBM domain is found at 152-222 (DAKTLLQEYL…AKLALDEVQK (71 aa)). Positions 229-256 (KRSRAERTGKTRKQPQPQDPQLSLRLKE) are disordered.

The protein belongs to the ribonuclease III family. Homodimer. It depends on Mg(2+) as a cofactor.

It localises to the cytoplasm. It carries out the reaction Endonucleolytic cleavage to 5'-phosphomonoester.. Digests double-stranded RNA. Involved in the processing of primary rRNA transcript to yield the immediate precursors to the large and small rRNAs (23S and 16S). Processes some mRNAs, and tRNAs when they are encoded in the rRNA operon. Processes pre-crRNA and tracrRNA of type II CRISPR loci if present in the organism. This Cupriavidus taiwanensis (strain DSM 17343 / BCRC 17206 / CCUG 44338 / CIP 107171 / LMG 19424 / R1) (Ralstonia taiwanensis (strain LMG 19424)) protein is Ribonuclease 3.